We begin with the raw amino-acid sequence, 182 residues long: MATLLLEDGTIESNLDEIARELAPLGVYIKHYDPGTSILFPHLLIQDALTDKEKCHIVDLHNSVFEFIQQENGYLWCDLLNVHPGSPNLQTLIATYAKYHTHTAPEALYVLAGEMIFGFVKPDGSQVQLLVQSQDYLHIPSGVEHWCSLTASLSFKAVRYFTAADGWVPNYTGTQLNDSLNK.

Fe(2+) is bound by residues His100, His102, Glu106, and His145. Residues His100, His102, Glu106, and His145 each contribute to the Ni(2+) site.

It belongs to the acireductone dioxygenase (ARD) family. As to quaternary structure, monomer. Fe(2+) serves as cofactor. Requires Ni(2+) as cofactor.

The enzyme catalyses 1,2-dihydroxy-5-(methylsulfanyl)pent-1-en-3-one + O2 = 3-(methylsulfanyl)propanoate + CO + formate + 2 H(+). The catalysed reaction is 1,2-dihydroxy-5-(methylsulfanyl)pent-1-en-3-one + O2 = 4-methylsulfanyl-2-oxobutanoate + formate + 2 H(+). Its pathway is amino-acid biosynthesis; L-methionine biosynthesis via salvage pathway; L-methionine from S-methyl-5-thio-alpha-D-ribose 1-phosphate: step 5/6. In terms of biological role, catalyzes 2 different reactions between oxygen and the acireductone 1,2-dihydroxy-3-keto-5-methylthiopentene (DHK-MTPene) depending upon the metal bound in the active site. Fe-containing acireductone dioxygenase (Fe-ARD) produces formate and 2-keto-4-methylthiobutyrate (KMTB), the alpha-ketoacid precursor of methionine in the methionine recycle pathway. Ni-containing acireductone dioxygenase (Ni-ARD) produces methylthiopropionate, carbon monoxide and formate, and does not lie on the methionine recycle pathway. The polypeptide is Acireductone dioxygenase (Trichormus variabilis (strain ATCC 29413 / PCC 7937) (Anabaena variabilis)).